A 338-amino-acid polypeptide reads, in one-letter code: RNA 3'-terminal phosphate cyclase (338 aa).

ATP is bound by residues Gln-103 and 283–287 (YLADQ). His-308 acts as the Tele-AMP-histidine intermediate in catalysis.

This sequence belongs to the RNA 3'-terminal cyclase family. Type 1 subfamily.

It localises to the cytoplasm. It carries out the reaction a 3'-end 3'-phospho-ribonucleotide-RNA + ATP = a 3'-end 2',3'-cyclophospho-ribonucleotide-RNA + AMP + diphosphate. In terms of biological role, catalyzes the conversion of 3'-phosphate to a 2',3'-cyclic phosphodiester at the end of RNA. The mechanism of action of the enzyme occurs in 3 steps: (A) adenylation of the enzyme by ATP; (B) transfer of adenylate to an RNA-N3'P to produce RNA-N3'PP5'A; (C) and attack of the adjacent 2'-hydroxyl on the 3'-phosphorus in the diester linkage to produce the cyclic end product. The biological role of this enzyme is unknown but it is likely to function in some aspects of cellular RNA processing. In Escherichia coli O8 (strain IAI1), this protein is RNA 3'-terminal phosphate cyclase.